Consider the following 168-residue polypeptide: NADH-quinone oxidoreductase subunit E 2 (168 aa).

The [2Fe-2S] cluster site is built by cysteine 77, cysteine 82, cysteine 118, and cysteine 122.

Belongs to the complex I 24 kDa subunit family. The cofactor is [2Fe-2S] cluster.

It catalyses the reaction a quinone + NADH + 5 H(+)(in) = a quinol + NAD(+) + 4 H(+)(out). Functionally, NDH-1 shuttles electrons from NADH, via FMN and iron-sulfur (Fe-S) centers, to quinones in the respiratory chain. The immediate electron acceptor for the enzyme in this species is believed to be ubiquinone. Couples the redox reaction to proton translocation (for every two electrons transferred, four hydrogen ions are translocated across the cytoplasmic membrane), and thus conserves the redox energy in a proton gradient. This chain is NADH-quinone oxidoreductase subunit E 2 (nuoE2), found in Rhizobium meliloti (strain 1021) (Ensifer meliloti).